The following is a 654-amino-acid chain: Marinolic acid--CoA ligase (654 aa).

It belongs to the ATP-dependent AMP-binding enzyme family.

The catalysed reaction is ATP + a marinolic acid + CoA = AMP + diphosphate + a marinoloyl-CoA.. The enzyme catalyses ATP + a pseudomonic acid + CoA = AMP + diphosphate + a pseudomonoyl-CoA.. It carries out the reaction marinolate C + ATP + CoA = marinoloyl-CoA C + AMP + diphosphate. It catalyses the reaction pseudomonate C + ATP + CoA = pseudomonoyl-CoA C + AMP + diphosphate. Its pathway is antibiotic biosynthesis. Its function is as follows. Acyl-CoA ligase that catalyzes the CoA acylation of pseudomonate C, leading to the formation of pseudomonoyl-CoA C (PAC-CoA). Also shows high activity with pseudomonoyl-CoA A as substrate. In addition, can activate acetic, octanoic, 2,4-dodecadienoic and 2,4-decadienoic acids, although with much lower activity. In vivo, is probably involved in the biosynthesis of thiomarinol, a naturally occurring double-headed antibiotic. This is Marinolic acid--CoA ligase from Pseudoalteromonas sp. (strain SANK 73390).